The following is a 244-amino-acid chain: UPF0280 protein Msp_1322 (244 aa).

This sequence belongs to the UPF0280 family.

This is UPF0280 protein Msp_1322 from Methanosphaera stadtmanae (strain ATCC 43021 / DSM 3091 / JCM 11832 / MCB-3).